We begin with the raw amino-acid sequence, 417 residues long: MLLSVPLLLGLLGLAAAEPAVYFKEQFLDGDDWTNRWVESKHKSDFGKFVLSSGKFYGDQEKDKGLQTSQDARFYALSARFEPFSNKGQTLVVQFTVKHEQNIDCGGGYVKLFPGSLDQKDMHGDSEYNIMFGPDICGPGTKKVHVIFNYKGKNVLINKDIRCKDDEFTHLYTLIVRPDNTYEVKIDNSQVESGSLEDDWDFLPPKKIKDPDAAKPEDWDERAKIDDPTDSKPEDWDKPEHIPDPDAKKPEDWDEEMDGEWEPPVIQNPEYKGEWKPRQIDNPDYKGTWIHPEIDNPEYSPDANIYAYDSFAVLGLDLWQVKSGTIFDNFLITNDEAYAEEFGNETWGVTKASEKQMKDKQDEEQRLKEEEEDKKRKEEEEAEDKEDEDDRDEDEEDEDEKEEDEEDTTPGQTKDEL.

The first 17 residues, 1-17 (MLLSVPLLLGLLGLAAA), serve as a signal peptide directing secretion. The N-domain stretch occupies residues 18–197 (EPAVYFKEQF…NSQVESGSLE (180 aa)). Position 26 (Gln26) interacts with Ca(2+). N6-acetyllysine is present on Lys48. Residues Lys62 and Lys64 each coordinate Ca(2+). An N6-(2-hydroxyisobutyryl)lysine modification is found at Lys64. Cys105 and Cys137 are disulfide-bonded. An alpha-D-glucoside contacts are provided by Tyr109, Lys111, Tyr128, and Asp135. Residue Lys159 is modified to N6-acetyllysine. The stretch at 191–202 (VESGSLEDDWDF) is one 1-1 repeat. Residues 191–255 (VESGSLEDDW…DAKKPEDWDE (65 aa)) are 4 X approximate repeats. A disordered region spans residues 193 to 277 (SGSLEDDWDF…NPEYKGEWKP (85 aa)). The P-domain stretch occupies residues 198–308 (DDWDFLPPKK…YSPDANIYAY (111 aa)). The segment covering 207–251 (KIKDPDAAKPEDWDERAKIDDPTDSKPEDWDKPEHIPDPDAKKPE) has biased composition (basic and acidic residues). Position 209 is an N6-acetyllysine (Lys209). 6 repeat units span residues 210–221 (DPDAAKPEDWDE), 227–238 (DPTDSKPEDWDK), 244–255 (DPDAKKPEDWDE), 259–269 (GEWEPPVIQNP), 273–283 (GEWKPRQIDNP), and 287–297 (GTWIHPEIDNP). Residues 237-270 (DKPEHIPDPDAKKPEDWDEEMDGEWEPPVIQNPE) are interaction with PPIB. Over residues 252–261 (DWDEEMDGEW) the composition is skewed to acidic residues. The interval 259 to 297 (GEWEPPVIQNPEYKGEWKPRQIDNPDYKGTWIHPEIDNP) is 3 X approximate repeats. The C-domain stretch occupies residues 309 to 417 (DSFAVLGLDL…TTPGQTKDEL (109 aa)). Residue Asp317 participates in an alpha-D-glucoside binding. Asp328 lines the Ca(2+) pocket. Residues 350–417 (TKASEKQMKD…TTPGQTKDEL (68 aa)) form a disordered region. Positions 352–379 (ASEKQMKDKQDEEQRLKEEEEDKKRKEE) are enriched in basic and acidic residues. Residues 380 to 408 (EEAEDKEDEDDRDEDEEDEDEKEEDEEDT) are compositionally biased toward acidic residues. Residues 414 to 417 (KDEL) carry the Prevents secretion from ER motif.

The protein belongs to the calreticulin family. As to quaternary structure, monomer. Component of an EIF2 complex at least composed of CELF1/CUGBP1, CALR, CALR3, EIF2S1, EIF2S2, HSP90B1 and HSPA5. Interacts with PDIA3/ERp57 and SPACA9. Interacts with TRIM21. Interacts with NR3C1. Interacts with PPIB. Interacts (via P-domain) with PDIA5. Interacts with GABARAP. Interacts with CLCC1.

The protein resides in the endoplasmic reticulum lumen. The protein localises to the cytoplasm. It localises to the cytosol. Its subcellular location is the cytolytic granule. It is found in the secreted. The protein resides in the extracellular space. The protein localises to the extracellular matrix. It localises to the cell surface. Its subcellular location is the sarcoplasmic reticulum lumen. It is found in the cytoplasmic vesicle. The protein resides in the secretory vesicle. The protein localises to the cortical granule. Its function is as follows. Calcium-binding chaperone that promotes folding, oligomeric assembly and quality control in the endoplasmic reticulum (ER) via the calreticulin/calnexin cycle. This lectin interacts transiently with almost all of the monoglucosylated glycoproteins that are synthesized in the ER. Interacts with the DNA-binding domain of NR3C1 and mediates its nuclear export. Involved in maternal gene expression regulation. May participate in oocyte maturation via the regulation of calcium homeostasis. Present in the cortical granules of non-activated oocytes, is exocytosed during the cortical reaction in response to oocyte activation and might participate in the block to polyspermy. This is Calreticulin (CALR) from Cricetulus griseus (Chinese hamster).